We begin with the raw amino-acid sequence, 654 residues long: Fructose-1,6-bisphosphatase class 3 (654 aa).

The disordered stretch occupies residues 288–307 (NPAFKPKKRPDKHERLTQRE). Basic and acidic residues predominate over residues 298–307 (DKHERLTQRE).

Belongs to the FBPase class 3 family. Mn(2+) serves as cofactor.

The enzyme catalyses beta-D-fructose 1,6-bisphosphate + H2O = beta-D-fructose 6-phosphate + phosphate. It functions in the pathway carbohydrate biosynthesis; gluconeogenesis. This is Fructose-1,6-bisphosphatase class 3 from Staphylococcus aureus (strain MRSA252).